The following is a 391-amino-acid chain: Casein kinase II subunit alpha (391 aa).

The interval 36–41 (QDDYQL) is interaction with beta subunit. The 286-residue stretch at 39-324 (YQLVRKLGRG…AREAMEHPYF (286 aa)) folds into the Protein kinase domain. ATP is bound by residues 45-53 (LGRGKYSEV) and lysine 68. Residue aspartate 156 is the Proton acceptor of the active site. Phosphothreonine; by CDK1 is present on residues threonine 344 and threonine 360. 2 positions are modified to phosphoserine; by CDK1: serine 362 and serine 370.

This sequence belongs to the protein kinase superfamily. Ser/Thr protein kinase family. CK2 subfamily. As to quaternary structure, heterotetramer composed of two catalytic subunits (alpha chain and/or alpha' chain) and two regulatory subunits (beta chains). The tetramer can exist as a combination of 2 alpha/2 beta, 2 alpha'/2 beta or 1 alpha/1 alpha'/2 beta subunits. Also part of a CK2-SPT16-SSRP1 complex composed of SSRP1, SUPT16H, CSNK2A1, CSNK2A2 and CSNK2B, which forms following UV irradiation. Interacts with RNPS1. Interacts with SNAI1. Interacts with PML. Interacts with CCAR2. Interacts with HIRIP3. Post-translationally, phosphorylated at Thr-344, Thr-360, Ser-362 and Ser-370 by CDK1 in prophase and metaphase and dephosphorylated during anaphase. Phosphorylation does not directly affect casein kinase 2 activity, but may contribute to its regulation by forming binding sites for interacting proteins and/or targeting it to different compartments.

It localises to the nucleus. It catalyses the reaction L-seryl-[protein] + ATP = O-phospho-L-seryl-[protein] + ADP + H(+). It carries out the reaction L-threonyl-[protein] + ATP = O-phospho-L-threonyl-[protein] + ADP + H(+). Its activity is regulated as follows. Constitutively active protein kinase whose activity is not directly affected by phosphorylation. Seems to be regulated by level of expression and localization. Functionally, catalytic subunit of a constitutively active serine/threonine-protein kinase complex that phosphorylates a large number of substrates containing acidic residues C-terminal to the phosphorylated serine or threonine. Regulates numerous cellular processes, such as cell cycle progression, apoptosis and transcription, as well as viral infection. May act as a regulatory node which integrates and coordinates numerous signals leading to an appropriate cellular response. During mitosis, functions as a component of the p53/TP53-dependent spindle assembly checkpoint (SAC) that maintains cyclin-B-CDK1 activity and G2 arrest in response to spindle damage. Also required for p53/TP53-mediated apoptosis, phosphorylating 'Ser-392' of p53/TP53 following UV irradiation. Phosphorylates a number of DNA repair proteins in response to DNA damage, such as MDC1, MRE11, RAD9A, RAD51 and HTATSF1, promoting their recruitment to DNA damage sites. Can also negatively regulate apoptosis. Phosphorylates the caspases CASP9 and CASP2 and the apoptotic regulator NOL3. Phosphorylation protects CASP9 from cleavage and activation by CASP8, and inhibits the dimerization of CASP2 and activation of CASP8. Phosphorylates YY1, protecting YY1 from cleavage by CASP7 during apoptosis. Regulates transcription by direct phosphorylation of RNA polymerases I, II, III and IV. Also phosphorylates and regulates numerous transcription factors including NF-kappa-B, STAT1, CREB1, IRF1, IRF2, ATF1, ATF4, SRF, MAX, JUN, FOS, MYC and MYB. Phosphorylates Hsp90 and its co-chaperones FKBP4 and CDC37, which is essential for chaperone function. Mediates sequential phosphorylation of FNIP1, promoting its gradual interaction with Hsp90, leading to activate both kinase and non-kinase client proteins of Hsp90. Regulates Wnt signaling by phosphorylating CTNNB1 and the transcription factor LEF1. Acts as an ectokinase that phosphorylates several extracellular proteins. Phosphorylates PML at 'Ser-565' and primes it for ubiquitin-mediated degradation. Plays an important role in the circadian clock function by phosphorylating BMAL1 at 'Ser-90' which is pivotal for its interaction with CLOCK and which controls CLOCK nuclear entry. Phosphorylates FMR1, promoting FMR1-dependent formation of a membraneless compartment. May phosphorylate histone H2A on 'Ser-1'. The sequence is that of Casein kinase II subunit alpha (Csnk2a1) from Rattus norvegicus (Rat).